A 233-amino-acid chain; its full sequence is LexA repressor (233 aa).

The segment at residues 26-46 is a DNA-binding region (H-T-H motif); that stretch reads FEEMKEALDLKSKSGVHRLIS. Catalysis depends on for autocatalytic cleavage activity residues Ser153 and Lys191.

This sequence belongs to the peptidase S24 family. Homodimer.

It catalyses the reaction Hydrolysis of Ala-|-Gly bond in repressor LexA.. In terms of biological role, represses a number of genes involved in the response to DNA damage (SOS response), including recA and lexA. In the presence of single-stranded DNA, RecA interacts with LexA causing an autocatalytic cleavage which disrupts the DNA-binding part of LexA, leading to derepression of the SOS regulon and eventually DNA repair. In Erythrobacter litoralis (strain HTCC2594), this protein is LexA repressor.